Here is a 494-residue protein sequence, read N- to C-terminus: MSAAAANTPSSSATILPFAEHSKVARDTRPLRLITCGSVDDGKSTLIGRLLWDTKAVKEDQAATLHRDSGKQNDLGLPDFALLLDGLQAEREQGITIDVAYRYFATDRRAFIVADTPGHEQYTRNMATGASTADLAVLLVDARTGILEQTRRHATIAALMGIRQFVLAVNKIDLTNYDKAGFELIAHEFRDFASDLGIKQITAIPMSALKGENVVLSGKASMPWYEGPTLVETLELATVRSTQSGGFRLPVQRVSRPGESFRGYQGTVAGGSVKPGDSVVVLPSGMVANVKQIVTFDLVRNAAVAGDAVTLVLDRQVDVSRGDMIVSIEAQPLTGLAFDAQIVALQPGGIEAGKRYWLKSASRRQRVSVQPVSQLNLREGEWQAHETSLPMNAIGKVRLSFDETAIFDPYEQNRATGSFILIDPDTNNTVAGGMISAKRSTGATEEQGDRVILSLPAGLAEKLLAGELLAKHRDEIDIRRTDAATASRLIGDLD.

The tr-type G domain maps to 28 to 242 (TRPLRLITCG…TLELATVRST (215 aa)). The interval 37–44 (GSVDDGKS) is G1. Residue 37–44 (GSVDDGKS) participates in GTP binding. A G2 region spans residues 94 to 98 (GITID). The segment at 115–118 (DTPG) is G3. Residues 115–119 (DTPGH) and 170–173 (NKID) contribute to the GTP site. The tract at residues 170-173 (NKID) is G4. The G5 stretch occupies residues 207–209 (SAL).

This sequence belongs to the TRAFAC class translation factor GTPase superfamily. Classic translation factor GTPase family. CysN/NodQ subfamily. Heterodimer composed of CysD, the smaller subunit, and CysN.

It catalyses the reaction sulfate + ATP + H(+) = adenosine 5'-phosphosulfate + diphosphate. It participates in sulfur metabolism; hydrogen sulfide biosynthesis; sulfite from sulfate: step 1/3. With CysD forms the ATP sulfurylase (ATPS) that catalyzes the adenylation of sulfate producing adenosine 5'-phosphosulfate (APS) and diphosphate, the first enzymatic step in sulfur assimilation pathway. APS synthesis involves the formation of a high-energy phosphoric-sulfuric acid anhydride bond driven by GTP hydrolysis by CysN coupled to ATP hydrolysis by CysD. In Agrobacterium fabrum (strain C58 / ATCC 33970) (Agrobacterium tumefaciens (strain C58)), this protein is Sulfate adenylyltransferase subunit 1.